Reading from the N-terminus, the 248-residue chain is Proteasome subunit alpha type-7 (248 aa).

A glycan (O-linked (GlcNAc) serine) is linked at serine 130. Phosphotyrosine is present on tyrosine 153.

The protein belongs to the peptidase T1A family. In terms of assembly, the 26S proteasome consists of a 20S proteasome core and two 19S regulatory subunits. The 20S proteasome core is a barrel-shaped complex made of 28 subunits that are arranged in four stacked rings. The two outer rings are each formed by seven alpha subunits, and the two inner rings are formed by seven beta subunits. The proteolytic activity is exerted by three beta-subunits PSMB5, PSMB6 and PSMB7. PSMA7 interacts directly with the PSMG1-PSMG2 heterodimer which promotes 20S proteasome assembly. Interacts with HIF1A. Interacts with RAB7A. Interacts with PRKN. Interacts with ABL1 and ABL2. Interacts with EMAP2. Interacts with MAVS.

It is found in the cytoplasm. The protein resides in the nucleus. Functionally, component of the 20S core proteasome complex involved in the proteolytic degradation of most intracellular proteins. This complex plays numerous essential roles within the cell by associating with different regulatory particles. Associated with two 19S regulatory particles, forms the 26S proteasome and thus participates in the ATP-dependent degradation of ubiquitinated proteins. The 26S proteasome plays a key role in the maintenance of protein homeostasis by removing misfolded or damaged proteins that could impair cellular functions, and by removing proteins whose functions are no longer required. Associated with the PA200 or PA28, the 20S proteasome mediates ubiquitin-independent protein degradation. This type of proteolysis is required in several pathways including spermatogenesis (20S-PA200 complex) or generation of a subset of MHC class I-presented antigenic peptides (20S-PA28 complex). Inhibits the transactivation function of HIF-1A under both normoxic and hypoxia-mimicking conditions. The interaction with EMAP2 increases the proteasome-mediated HIF-1A degradation under the hypoxic conditions. Plays a role in hepatitis C virus internal ribosome entry site-mediated translation. Mediates nuclear translocation of the androgen receptor (AR) and thereby enhances androgen-mediated transactivation. Promotes MAVS degradation and thereby negatively regulates MAVS-mediated innate immune response. This is Proteasome subunit alpha type-7 (PSMA7) from Pongo abelii (Sumatran orangutan).